The chain runs to 460 residues: Lipase member H (460 aa).

Positions 1–24 (MLLRFYFNGLLFVGCLLSWGRSDT) are cleaved as a signal peptide. Asn67 and Asn75 each carry an N-linked (GlcNAc...) asparagine glycan. The Nucleophile role is filled by Ser163. A glycan (N-linked (GlcNAc...) asparagine) is linked at Asn177. The Charge relay system role is filled by Asp187. Cys242 and Cys255 form a disulfide bridge. His257 (charge relay system) is an active-site residue. Disulfide bonds link Cys279/Cys290 and Cys293/Cys301. An N-linked (GlcNAc...) asparagine glycan is attached at Asn289. An N-linked (GlcNAc...) asparagine glycan is attached at Asn366. The cysteines at positions 436 and 455 are disulfide-linked.

The protein belongs to the AB hydrolase superfamily. Lipase family.

Its subcellular location is the secreted. The protein resides in the cell membrane. It carries out the reaction 1-hexadecanoyl-2-(9Z-octadecenoyl)-sn-glycero-3-phosphate + H2O = 2-(9Z-octadecenoyl)-sn-glycero-3-phosphate + hexadecanoate + H(+). Functionally, hydrolyzes specifically phosphatidic acid (PA) to produce 2-acyl lysophosphatidic acid (LPA; a potent bioactive lipid mediator) and fatty acid. Does not hydrolyze other phospholipids, like phosphatidylserine (PS), phosphatidylcholine (PC) and phosphatidylethanolamine (PE) or triacylglycerol (TG). This Xenopus tropicalis (Western clawed frog) protein is Lipase member H (liph).